Consider the following 455-residue polypeptide: MKFKLFLLVFFVFLLPYLSQSCENTFSCPTLNQTCTGQCSAGLVCNQTLSSCQEYEKCDSSLPLAEDTCSQDGYICVSNVCLPFIGTQYPSSQCKQNSNCLMSLCAGNICMVMPGSQCQTNSQCSPDQFCSTTFIGTTSTSPSTMTLPMTMTLPMTMTLPITMTMGSSSVCTNRLQLNSQCSTSDSCQTGLACINSVCSPIFSGAENATCFPGAIEPTKAACDVGLSCLNGANGYSCKSYVENQSCDPSDEYPVCNSDYQSCKCNSKGKGSCQSYYKLTQECKDSSNKLVLCAKSKNSIPSYKDYVTQINCQSQLCNYSRDCIDPKAKVSTCFNDLFLMCPSDYQEPEIGSSSSSSSSSSSSGSSSNSTSSSTSSTSSTSSESSESSNGSNSNSVSSESSSPSSSSVESSSNSKSNHTSSESSSSDDDLGNPSSSSILSVSKLIILLISIILYCF.

A signal peptide spans 1 to 21 (MKFKLFLLVFFVFLLPYLSQS). The segment at 349-434 (IGSSSSSSSS…SDDDLGNPSS (86 aa)) is disordered. Positions 351–423 (SSSSSSSSSS…KSNHTSSESS (73 aa)) are enriched in low complexity. Serine 433 carries the GPI-like-anchor amidated serine lipid modification. Positions 434 to 455 (SSSILSVSKLIILLISIILYCF) are cleaved as a propeptide — removed in mature form.

The protein resides in the cell membrane. Its function is as follows. Plays a role in differentiation. The sequence is that of Differentiation-associated protein 1 (dia1) from Dictyostelium discoideum (Social amoeba).